Reading from the N-terminus, the 171-residue chain is Endoribonuclease YbeY (171 aa).

Zn(2+) contacts are provided by H130, H134, and H140.

The protein belongs to the endoribonuclease YbeY family. Zn(2+) serves as cofactor.

Its subcellular location is the cytoplasm. In terms of biological role, single strand-specific metallo-endoribonuclease involved in late-stage 70S ribosome quality control and in maturation of the 3' terminus of the 16S rRNA. The sequence is that of Endoribonuclease YbeY from Neisseria meningitidis serogroup A / serotype 4A (strain DSM 15465 / Z2491).